The primary structure comprises 235 residues: Probable pyridoxal 5'-phosphate synthase subunit PDX1 (235 aa).

Residue K16 is the Schiff-base intermediate with D-ribose 5-phosphate of the active site. Residue R104 coordinates D-glyceraldehyde 3-phosphate. Residues G153 and 174-175 each bind D-ribose 5-phosphate; that span reads GS.

This sequence belongs to the PdxS/SNZ family.

It catalyses the reaction aldehydo-D-ribose 5-phosphate + D-glyceraldehyde 3-phosphate + L-glutamine = pyridoxal 5'-phosphate + L-glutamate + phosphate + 3 H2O + H(+). It functions in the pathway cofactor biosynthesis; pyridoxal 5'-phosphate biosynthesis. Catalyzes the formation of pyridoxal 5'-phosphate from ribose 5-phosphate (RBP), glyceraldehyde 3-phosphate (G3P) and ammonia. The ammonia is provided by PDX2. Can also use ribulose 5-phosphate and dihydroxyacetone phosphate as substrates, resulting from enzyme-catalyzed isomerization of RBP and G3P, respectively. Also plays an indirect role in resistance to singlet oxygen-generating photosensitizers. The chain is Probable pyridoxal 5'-phosphate synthase subunit PDX1 from Stellaria longipes (Longstalk starwort).